Reading from the N-terminus, the 146-residue chain is MKTLLVLALLLLSVSVQAKVYDRCEFARILKKSGMDGYRGVSLANWVCLAKWESDFNTKAINHNVGSTDYGIFQINSRYWCNDGKTPKAVNACHISCKVLLDDDLSQDIECAKRVVRDPLGVKAWVAWRAHCQNKDVSQYIRGCKL.

The first 18 residues, 1–18 (MKTLLVLALLLLSVSVQA), serve as a signal peptide directing secretion. The region spanning 19–146 (KVYDRCEFAR…VSQYIRGCKL (128 aa)) is the C-type lysozyme domain. Disulfide bonds link Cys24–Cys144, Cys48–Cys132, Cys81–Cys97, and Cys93–Cys111. Active-site residues include Glu53 and Asp69.

This sequence belongs to the glycosyl hydrolase 22 family. Monomer.

It is found in the secreted. It carries out the reaction Hydrolysis of (1-&gt;4)-beta-linkages between N-acetylmuramic acid and N-acetyl-D-glucosamine residues in a peptidoglycan and between N-acetyl-D-glucosamine residues in chitodextrins.. Functionally, lysozymes have primarily a bacteriolytic function; those in tissues and body fluids are associated with the monocyte-macrophage system and enhance the activity of immunoagents. This chain is Lysozyme C-2, found in Sus scrofa (Pig).